A 303-amino-acid polypeptide reads, in one-letter code: uncharacterized protein (303 aa).

The S4 RNA-binding domain maps to 15-74 (ERIDKFLASTENDWSRTQVQQWVKDGQVVVNGSAVKANYKIQPGDQVTVTVPEPEALDVL). Asp-138 is an active-site residue.

This sequence belongs to the pseudouridine synthase RluA family.

The enzyme catalyses a uridine in RNA = a pseudouridine in RNA. This is an uncharacterized protein from Bacillus subtilis (strain 168).